We begin with the raw amino-acid sequence, 302 residues long: Recombination-associated protein RdgC (302 aa).

It belongs to the RdgC family.

Its subcellular location is the cytoplasm. The protein resides in the nucleoid. Functionally, may be involved in recombination. The chain is Recombination-associated protein RdgC from Proteus mirabilis (strain HI4320).